The chain runs to 375 residues: All-trans-retinol dehydrogenase [NAD(+)] ADH1B (375 aa).

Position 2 is an N-acetylserine (serine 2). Serine 23 is modified (phosphoserine). Tyrosine 35 carries the post-translational modification Phosphotyrosine. Residues cysteine 47, histidine 68, cysteine 98, cysteine 101, cysteine 104, cysteine 112, and cysteine 175 each coordinate Zn(2+). Residues 200-205, aspartate 224, lysine 229, 293-295, and arginine 370 each bind NAD(+); these read GLGGVG and VGV.

The protein belongs to the zinc-containing alcohol dehydrogenase family. As to quaternary structure, homodimer or heterodimer of closely related subunits. Requires Zn(2+) as cofactor.

It is found in the cytoplasm. The catalysed reaction is all-trans-retinol + NAD(+) = all-trans-retinal + NADH + H(+). It carries out the reaction all-trans-4-hydroxyretinol + NAD(+) = all-trans-4-hydroxyretinal + NADH + H(+). It catalyses the reaction all-trans-4-oxoretinol + NAD(+) = all-trans-4-oxoretinal + NADH + H(+). Catalyzes the NAD-dependent oxidation of all-trans-retinol and its derivatives such as all-trans-4-hydroxyretinol and may participate in retinoid metabolism. In vitro can also catalyze the NADH-dependent reduction of all-trans-retinal and its derivatives such as all-trans-4-oxoretinal. Catalyzes in the oxidative direction with higher efficiency. Has the same affinity for all-trans-4-hydroxyretinol and all-trans-4-oxoretinal. The chain is All-trans-retinol dehydrogenase [NAD(+)] ADH1B from Pan troglodytes (Chimpanzee).